The following is an 85-amino-acid chain: Putative RING finger protein 095L (85 aa).

Residues 39–73 (CPIWYNYQVNTVFLPCAHVACYLCSKIIKNCHLCR) form an RING-type; degenerate zinc finger.

This chain is Putative RING finger protein 095L, found in Invertebrate iridescent virus 6 (IIV-6).